A 372-amino-acid chain; its full sequence is DNA damage-repair/toleration protein DRT100 (372 aa).

A signal peptide spans 1–26 (MRKLLASPFSSLLAVVFISVISVVRC). LRR repeat units follow at residues 136–158 (SLRI…IGKL), 160–183 (KLAV…TSLI), 184–205 (ELKH…DFGS), 208–230 (MLSR…ISGM), 232–254 (RLAD…MGNM), 256–277 (VLSL…SLLS), 280–302 (GLDV…FGSK), 304–326 (YLVS…LSSA), and 328–350 (FVGH…FPFD).

Its function is as follows. This protein is able to complement bacterial recA mutations, but its native function in the plant is not known. In Arabidopsis thaliana (Mouse-ear cress), this protein is DNA damage-repair/toleration protein DRT100 (DRT100).